Reading from the N-terminus, the 409-residue chain is MKPSHSSCEAAPLLPNMAETHYAPLSSAFPFVTSYQTGSSRLPEVSRSTERALREGKLLELVYGIKETVATLSQIPVSIFVTGDSGNGMSSFINALRVIGHDEDASAPTGVVRTTKTRTEYSSSHFPNVVLWDLPGLGATAQTVEDYVEEMKFSTCDLFIIIASEQFSSNHVKLSKIIQSMGKRFYIVWTKLDRDLSTSVLSEVRLLQNIQENIRENLQKEKVKYPPVFLVSSLDPLLYDFPKLRDTLHKDLSNIRCCEPLKTLYGTYEKIVGDKVAVWKQRIANESLKNSLGVRDDDNMGECLKVYRLIFGVDDESVQQVAQSMGTVVMEYKDNMKSQNFYTLRREDWKLRLMTCAIVNAFFRLLRFLPCVCCCLRRLRHKRMLFLVAQDTKNILEKILRDSIFPPQI.

Residues 75–251 (IPVSIFVTGD…PKLRDTLHKD (177 aa)) form the IRG-type G domain. GTP contacts are provided by residues 84 to 91 (DSGNGMSS), 109 to 113 (TGVVR), and 191 to 193 (KLD). The residue at position 202 (S202) is a Phosphoserine. A GTP-binding site is contributed by 232–234 (SSL). A Glycyl lysine isopeptide (Lys-Gly) (interchain with G-Cter in ubiquitin) cross-link involves residue K270. Positions 350-374 (KLRLMTCAIVNAFFRLLRFLPCVCC) are alpha-K amphipathic helix.

It belongs to the TRAFAC class dynamin-like GTPase superfamily. IRG family. Interacts with ULK1; promoting the coassembly of ULK1 and BECN1. Interacts with BECN1; enhancing BECN1-interacting partners and influencing the composition of the BECN1 complex. Interacts with ATG16L1. Interacts with NOD2; promoting Irgm1 'Lys-63'-linked polyubiquitination, which is required for interactions with the core autophagy factors. Interacts with STX17; promoting STX17 recruitment to autophagosomes. Interacts with ATG8 proteins (GABARAP, GABARAPL1, GABARAPL2, MAP1LC3A, MAP1LC3B and MAP1LC3C); promoting STX17 recruitment to autophagosomes. Interacts with TFEB; promoting association between TFEB and PPP3CB and TFEB dephosphorylation. Interacts with PPP3CB; promoting association between TFEB and PPP3CB and TFEB dephosphorylation. Interacts with NLRP3; preventing NLRP3 inflammasome assembly and promoting SQSTM1/p62-dependent autophagic degradation of NLRP3. Interacts with CGAS; promoting SQSTM1/p62-dependent autophagic degradation of CGAS. Interacts with RIGI/RIG-I; promoting SQSTM1/p62-dependent autophagic degradation of RIGI/RIG-I. Interacts with NOD1; promoting SQSTM1/p62-dependent autophagic degradation of RIGI/RIG-I. Interacts with NOD2; promoting SQSTM1/p62-dependent autophagic degradation of RIGI/RIG-I. Interacts with RIPK2; promoting SQSTM1/p62-dependent autophagic degradation of RIGI/RIG-I. Interacts with PIK3CA. Post-translationally, palmitoylated on C-terminal Cys residues. Palmitoylation, together with the alpha-K amphipathic helix, which binds phosphatidylinositol, mediate binding to membranes. In terms of processing, ubiquitinated via 'Lys-63'-linked polyubiquitination in a NOD2-dependent process. 'Lys-63'-linked polyubiquitination is required for interactions with the core autophagy factors. Ubiquitination at Lys-270 by the DCX(WDR77) complex, also named CLR4(WDR77) complex, in intestinal cells, leading to its degradation by the proteasome. In terms of tissue distribution, expressed in lung and primary macrophages.

The protein resides in the golgi apparatus membrane. It is found in the cell membrane. Its subcellular location is the cytoplasmic vesicle. It localises to the phagosome membrane. The protein localises to the autophagosome membrane. The protein resides in the lysosome membrane. It is found in the late endosome membrane. Its subcellular location is the mitochondrion membrane. It localises to the lipid droplet. The protein localises to the cell projection. The protein resides in the phagocytic cup. It carries out the reaction GTP + H2O = GDP + phosphate + H(+). In terms of biological role, immunity-related GTPase that plays important roles in innate immunity and inflammatory response. Acts as a dynamin-like protein that binds to intracellular membranes and promotes remodeling and trafficking of those membranes. Required for clearance of acute protozoan and bacterial infections by interacting with autophagy and lysosome regulatory proteins, thereby promoting the fusion of phagosomes with lysosomes for efficient degradation of cargo including microbes. Regulates selective autophagy, including xenophagy and mitophagy, both directly and indirectly. Directly regulates autophagy by acting as a molecular adapter that promotes the coassembly of the core autophagy machinery to mediate antimicrobial defense: Irgm1 (1) activates AMPK, which in turn phosphorylates ULK1 and BECN1 to induce autophagy, (2) promotes the coassembly of ULK1 and BECN1, enhancing BECN1-interacting partners and (3) influences the composition of the BECN1 complex, by competing with the negative regulators BCL2 and RUBCN, to trigger autophagy. Also activates autophagy by promoting recruitment of STX17 to autophagosomes. In collaboration with ATG8 proteins, regulate lysosomal biogenesis, a fundamental process for any autophagic pathway, by promoting TFEB dephosphorylation. Also modulates autophagy by assisting with autophagosome formation and preventing lysosomal deacidification. Regulates autophagy by affecting mitochondrial fusion and fission. Also involved in M1 macrophage activation for the production of proinflammatory cytokines. While activating autophagy, acts as a key negative regulator of the inflammatory and interferon responses both by (1) promoting mitophagy and (2) mediating autophagy-dependent degradation of effectors of the inflammatory response. Promotes degradation of damaged and IFNG/IFN-gamma-stressed mitochondria via mitophagy, preventing cytosolic release of ligands that activate inflammation. Negatively regulates interferon-signaling in hematopoietic stem cells, preserving hematopoietic stem cell number and function. Promotes expansion of activated CD4(+) T-cells by inhibiting IFNG/IFN-gamma signaling, thereby preventing Ifng-mediated cell death of CD4(+) T-cells. Acts as a suppressor of inflammation by promoting recruitment of inflammation effectors, such as CGAS, RIGI/RIG-I and NLRP3, to autophagosome membranes, leading to their SQSTM1/p62-dependent autophagic degradation. Also directly inhibits assembly of the NLRP3 inflammasome by preventing the association between NLRP3 and PYCARD. Acts as a negative regulator of antiviral innate immune response by suppressing the RIPK2-dependent pro-inflammatory response: mediates recruitment of RIPosomes, composed of RIPK2 and NOD1 or NOD2, to autophagosome membranes, promoting their SQSTM1/p62-dependent autophagic degradation. This Mus musculus (Mouse) protein is Immunity-related GTPase family M protein 1.